The primary structure comprises 94 residues: Selenoprotein K (94 aa).

A helical transmembrane segment spans residues 20-42; that stretch reads VSFLTDFFWGIAEFVVFFFKTLL. Residues 46-94 form a disordered region; it reads VKKRRGYGSSSDSRYDDGRGPPGNPPRRMGRISHLRGPSPPPMAGGUGR. Position 92 (selenocysteine 92) is a non-standard amino acid, selenocysteine.

The protein belongs to the selenoprotein K family. As to quaternary structure, interacts with DERL1, DERL2, DERL3 and SELENOS. The SELENOK-SELENOS complex interacts with VCP. Interacts with ZDHHC6. In terms of processing, cleaved by CAPN2/m-calpain in resting macrophages but not in activated macrophages. Macrophage activation up-regulates expression of the calpain inhibitor CAST/calpastatin, resulting in inhibition of CAPN2 activity. Truncated SELENOK proteins produced by failed UGA/Sec decoding are ubiquitinated by the CRL2(KLHDC2) complex, which recognizes the diglycine (Gly-Gly) at the C-terminus of truncated SELENOK proteins. In terms of tissue distribution, high expression in spleen and intestine (at protein level). Expressed in a range of immune cells including T and B-cells and also in myeloid cells including macrophages, neutrophils and dendritic cells (at protein level).

The protein resides in the endoplasmic reticulum membrane. It localises to the cell membrane. Required for Ca(2+) flux in immune cells and plays a role in T-cell proliferation and in T-cell and neutrophil migration. Involved in endoplasmic reticulum-associated degradation (ERAD) of soluble glycosylated proteins. Required for palmitoylation and cell surface expression of CD36 and involved in macrophage uptake of low-density lipoprotein and in foam cell formation. Together with ZDHHC6, required for palmitoylation of ITPR1 in immune cells, leading to regulate ITPR1 stability and function. Plays a role in protection of cells from ER stress-induced apoptosis. Protects cells from oxidative stress when overexpressed in cardiomyocytes. In Mus musculus (Mouse), this protein is Selenoprotein K.